A 154-amino-acid chain; its full sequence is Avirulence protein ATR13 (154 aa).

The signal sequence occupies residues 1–19; that stretch reads MRLVHAVLLPGIIVFVSNG. The short motif at 38–41 is the RxLR element; the sequence is RQLR. The tract at residues 50-92 is leucine heptad repeat region; the sequence is LSRASFGLGKAQDPLDKFFSKIIFSGKPIETSYSAKGIHEKII. The tract at residues 93 to 103 is single repeat region; it reads EAHDLHVSKSK. The tract at residues 104–154 is highly variable C-terminus domain; the sequence is NAPIQYASVMEYLKKTYPGPDIERIVSTLERHDEVGAKDLGAKLRDALDRQ.

The protein belongs to the RxLR effector family.

The protein localises to the secreted. The protein resides in the host cytoplasm. In terms of biological role, secreted effector that acts as an elicitor of hypersensitive response (HR) specifically on plants carrying defense protein RPP13. Recognition of ATR13 by RPP13 initiates defense responses that are effective against oomycete, bacterial and viral pathogens. The allele ATR13-Emco5 recognizes RPP13-Nd, the RPP13 defense protein from Arabidopsis thaliana ecotype Niederzenz. This Hyaloperonospora arabidopsidis (Peronospora arabidopsidis) protein is Avirulence protein ATR13.